A 227-amino-acid polypeptide reads, in one-letter code: DNA repair protein RecO (227 aa).

The protein belongs to the RecO family.

Functionally, involved in DNA repair and RecF pathway recombination. This Pseudomonas savastanoi pv. phaseolicola (strain 1448A / Race 6) (Pseudomonas syringae pv. phaseolicola (strain 1448A / Race 6)) protein is DNA repair protein RecO.